A 358-amino-acid chain; its full sequence is Acid phosphatase (358 aa).

An N-terminal signal peptide occupies residues 1 to 17 (MKFSTIALPLLASAALA). Residues Asn-20, Asn-27, and Asn-32 are each glycosylated (N-linked (GlcNAc...) asparagine). A disordered region spans residues 21 to 41 (SSHSGTNATSHNSTVPNENSK). 3 residues coordinate Mg(2+): Asp-49, Asp-50, and Ser-81. N-linked (GlcNAc...) asparagine glycans are attached at residues Asn-92 and Asn-145. A Mg(2+)-binding site is contributed by Asn-156. Ser-189 is a catalytic residue. Asn-199 and Asn-278 each carry an N-linked (GlcNAc...) asparagine glycan.

The protein belongs to the SurE nucleotidase family. Mg(2+) serves as cofactor.

Its subcellular location is the secreted. The catalysed reaction is a phosphate monoester + H2O = an alcohol + phosphate. Functionally, probably serves to scavenge phosphorus for growing cells. The chain is Acid phosphatase (PHO2) from Yarrowia lipolytica (strain CLIB 122 / E 150) (Yeast).